We begin with the raw amino-acid sequence, 87 residues long: Cell division topological specificity factor (87 aa).

It belongs to the MinE family.

In terms of biological role, prevents the cell division inhibition by proteins MinC and MinD at internal division sites while permitting inhibition at polar sites. This ensures cell division at the proper site by restricting the formation of a division septum at the midpoint of the long axis of the cell. This is Cell division topological specificity factor from Blochmanniella pennsylvanica (strain BPEN).